The primary structure comprises 580 residues: NADH-quinone oxidoreductase subunit C/D (580 aa).

An NADH dehydrogenase I subunit C region spans residues 1 to 171 (MSLDQAIPEA…PPFVLTDRLF (171 aa)). Positions 195 to 580 (ELMVLNFGPH…IDFVMSDVDR (386 aa)) are NADH dehydrogenase I subunit D.

This sequence in the N-terminal section; belongs to the complex I 30 kDa subunit family. In the C-terminal section; belongs to the complex I 49 kDa subunit family. NDH-1 is composed of 13 different subunits. Subunits NuoB, CD, E, F, and G constitute the peripheral sector of the complex.

It is found in the cell inner membrane. It catalyses the reaction a quinone + NADH + 5 H(+)(in) = a quinol + NAD(+) + 4 H(+)(out). NDH-1 shuttles electrons from NADH, via FMN and iron-sulfur (Fe-S) centers, to quinones in the respiratory chain. The immediate electron acceptor for the enzyme in this species is believed to be ubiquinone. Couples the redox reaction to proton translocation (for every two electrons transferred, four hydrogen ions are translocated across the cytoplasmic membrane), and thus conserves the redox energy in a proton gradient. The chain is NADH-quinone oxidoreductase subunit C/D from Cereibacter sphaeroides (strain KD131 / KCTC 12085) (Rhodobacter sphaeroides).